The chain runs to 363 residues: MASSTSTRTPAGKRVVNQEELRRLMREKQRLSTNRKRIESPFAKYNRLGQLSCALCNTPVKSELLWQTHVLGKQHRERVAELKGAKGATQGPSTGTVPQATKRRATDVESQDAKKAKASAGPQVQPSTSASSANLDAARAAPSKPGLGLLPDYDDEEEEEEEGGGEERRDSSKHLPDAQGKEHSLASPRETTSNVLPNDPFNTNPPKAPLVPHSGSIEKAEIHEKVVERRENTAEALPEGFFDDPEVDAKVRKVDAPKDQMDKEWDEFQKAMRQVNTISEAIVAEEDEEGRLDRQIGEIDEQIECYRRVEKLRNRQDEIKNKLKEVLTIKELQKKEEENVDSDDEGELQDLLSQDWRVKGALL.

An N-acetylalanine modification is found at alanine 2. Positions 16-40 (VNQEELRRLMREKQRLSTNRKRIES) form a coiled coil. The C2H2-type zinc-finger motif lies at 53–75 (CALCNTPVKSELLWQTHVLGKQH). Residues 81–213 (ELKGAKGATQ…NPPKAPLVPH (133 aa)) form a disordered region. The span at 90–99 (QGPSTGTVPQ) shows a compositional bias: polar residues. Residues 104–115 (RATDVESQDAKK) show a composition bias toward basic and acidic residues. Positions 129–143 (SASSANLDAARAAPS) are enriched in low complexity. A compositionally biased stretch (acidic residues) spans 152–164 (DYDDEEEEEEEGG). The span at 165-184 (GEERRDSSKHLPDAQGKEHS) shows a compositional bias: basic and acidic residues. Residues 189-205 (RETTSNVLPNDPFNTNP) show a composition bias toward polar residues. Phosphoserine is present on serine 216. Residues 303-331 (IECYRRVEKLRNRQDEIKNKLKEVLTIKE) are a coiled coil. Phosphoserine is present on residues serine 342 and serine 353.

Component of the XAB2 complex, a multimeric protein complex composed of XAB2, PRPF19, AQR, ZNF830, ISY1, and PPIE; this complex binds preferentially to RNA. Interacts with XAB2. Identified in a pentameric intron-binding (IB) complex composed of AQR, XAB2, ISY1, ZNF830 and PPIE that is incorporated into the spliceosome as a preassembled complex. The IB complex does not contain PRPF19. Post-translationally, phosphorylated in response to DNA damage by the cell cycle checkpoint kinases ATR/ATM. In terms of tissue distribution, widely expressed at low level. Expressed in oocytes from primordial to antral follicles. Also detected in somatic cells of the ovary, namely, in granulosa cells from the pre-antral follicle stage onward.

It is found in the nucleus. Its subcellular location is the chromosome. It localises to the nucleus speckle. May play a role in pre-mRNA splicing as component of the spliceosome. Acts as an important regulator of the cell cycle that participates in the maintenance of genome integrity. During cell cycle progression in embryonic fibroblast, prevents replication fork collapse, double-strand break formation and cell cycle checkpoint activation. Controls mitotic cell cycle progression and cell survival in rapidly proliferating intestinal epithelium and embryonic stem cells. During the embryo preimplantation, controls different aspects of M phase. During early oocyte growth, plays a role in oocyte survival by preventing chromosomal breaks formation, activation of TP63 and reduction of transcription. The chain is Zinc finger protein 830 from Mus musculus (Mouse).